The following is a 42-amino-acid chain: Photosystem I reaction center subunit IX (42 aa).

A helical transmembrane segment spans residues Tyr7–Ile27.

This sequence belongs to the PsaJ family.

It is found in the plastid. The protein resides in the chloroplast thylakoid membrane. Its function is as follows. May help in the organization of the PsaE and PsaF subunits. The polypeptide is Photosystem I reaction center subunit IX (Lemna minor (Common duckweed)).